The chain runs to 206 residues: Cytochrome b-245 chaperone 1 homolog (206 aa).

Residues 21-43 (GIRSWSILVGIASVGLAAAYYSS) form a helical membrane-spanning segment. Positions 172–206 (ADDDYPDDDDGIEDLGLGDSSDSQDDPDGDDDEEH) are disordered. Acidic residues-rich tracts occupy residues 174-184 (DDYPDDDDGIE) and 193-206 (DSQD…DEEH).

Belongs to the CYBC1 family.

The protein localises to the endoplasmic reticulum membrane. Its function is as follows. Functions as a chaperone necessary for a stable expression of the CYBA and CYBB subunits of the cytochrome b-245 heterodimer. The chain is Cytochrome b-245 chaperone 1 homolog from Danio rerio (Zebrafish).